The chain runs to 120 residues: NAD(P)H-quinone oxidoreductase subunit 3, chloroplastic (120 aa).

Transmembrane regions (helical) follow at residues 9–29, 64–84, and 88–108; these read IFWAFLVISSVIPILAFIISG, MFALVFVVFDVETVFLYPWAM, and VLGVSVFIEALIFVLILIVGS.

It belongs to the complex I subunit 3 family. As to quaternary structure, NDH is composed of at least 16 different subunits, 5 of which are encoded in the nucleus.

The protein localises to the plastid. The protein resides in the chloroplast thylakoid membrane. It catalyses the reaction a plastoquinone + NADH + (n+1) H(+)(in) = a plastoquinol + NAD(+) + n H(+)(out). The enzyme catalyses a plastoquinone + NADPH + (n+1) H(+)(in) = a plastoquinol + NADP(+) + n H(+)(out). Its function is as follows. NDH shuttles electrons from NAD(P)H:plastoquinone, via FMN and iron-sulfur (Fe-S) centers, to quinones in the photosynthetic chain and possibly in a chloroplast respiratory chain. The immediate electron acceptor for the enzyme in this species is believed to be plastoquinone. Couples the redox reaction to proton translocation, and thus conserves the redox energy in a proton gradient. The polypeptide is NAD(P)H-quinone oxidoreductase subunit 3, chloroplastic (Lemna minor (Common duckweed)).